Here is a 533-residue protein sequence, read N- to C-terminus: Beta-1,4 N-acetylgalactosaminyltransferase 1 (533 aa).

The Cytoplasmic segment spans residues 1–7; that stretch reads MWLGRRA. Residues 8 to 25 traverse the membrane as a helical; Signal-anchor for type II membrane protein segment; sequence LCALVLLLACASLGLLYA. The Lumenal segment spans residues 26–533; sequence STRDAPGLRL…KHRLQCMTSQ (508 aa). Asparagine 79, asparagine 179, and asparagine 274 each carry an N-linked (GlcNAc...) asparagine glycan. The cysteines at positions 429 and 476 are disulfide-linked.

This sequence belongs to the glycosyltransferase 2 family. Homodimer; disulfide-linked.

The protein resides in the golgi apparatus membrane. The catalysed reaction is a ganglioside GM3 (d18:1(4E)) + UDP-N-acetyl-alpha-D-galactosamine = a ganglioside GM2 (d18:1(4E)) + UDP + H(+). It carries out the reaction a ganglioside GM3 + UDP-N-acetyl-alpha-D-galactosamine = a ganglioside GM2 + UDP + H(+). It catalyses the reaction a ganglioside GD3 + UDP-N-acetyl-alpha-D-galactosamine = a ganglioside GD2 + UDP + H(+). The enzyme catalyses a ganglioside GD3 (d18:1(4E)) + UDP-N-acetyl-alpha-D-galactosamine = a ganglioside GD2 (d18:1(4E)) + UDP + H(+). The catalysed reaction is a beta-D-Gal-(1-&gt;4)-beta-D-Glc-(1&lt;-&gt;1)-Cer(d18:1(4E)) + UDP-N-acetyl-alpha-D-galactosamine = a ganglioside GA2 (d18:1(4E)) + UDP + H(+). It carries out the reaction a ganglioside GD1a + UDP-N-acetyl-alpha-D-galactosamine = a ganglioside GalNAc-GD1a + UDP + H(+). It catalyses the reaction a ganglioside GT3 (d18:1(4E)) + UDP-N-acetyl-alpha-D-galactosamine = a ganglioside GT2 (d18:1(4E)) + UDP + H(+). The enzyme catalyses a beta-D-galactosyl-(1-&gt;4)-beta-D-glucosyl-(1&lt;-&gt;1)-ceramide + UDP-N-acetyl-alpha-D-galactosamine = a ganglioside GA2 + UDP + H(+). The catalysed reaction is a neolactoside IV(3)-alpha-NeuGc-nLc4Cer + UDP-N-acetyl-alpha-D-galactosamine = a neolactoside IV(4)-beta-GalNAc-IV(3)-alpha-NeuGc-nLc4Cer + UDP + H(+). It functions in the pathway sphingolipid metabolism. In terms of biological role, involved in the biosynthesis of gangliosides GM2, GD2, GT2 and GA2 from GM3, GD3, GT3 and GA3, respectively. The polypeptide is Beta-1,4 N-acetylgalactosaminyltransferase 1 (Homo sapiens (Human)).